The chain runs to 134 residues: Small ribosomal subunit protein uS11 (134 aa).

The interval 115–134 is disordered; it reads TPIPHNGTRPPKKVLKRDLK. Over residues 124 to 134 the composition is skewed to basic residues; the sequence is PPKKVLKRDLK.

It belongs to the universal ribosomal protein uS11 family. In terms of assembly, part of the 30S ribosomal subunit. Interacts with proteins S7 and S18. Binds to IF-3.

Its function is as follows. Located on the platform of the 30S subunit, it bridges several disparate RNA helices of the 16S rRNA. Forms part of the Shine-Dalgarno cleft in the 70S ribosome. This is Small ribosomal subunit protein uS11 from Mycoplasma mobile (strain ATCC 43663 / 163K / NCTC 11711) (Mesomycoplasma mobile).